The chain runs to 509 residues: Dihydrolipoyl dehydrogenase, mitochondrial (509 aa).

A mitochondrion-targeting transit peptide spans 1–35 (MQSWSRVYCSLVKRGHFSRISHGLQGVSVVPLRTY). At K66 the chain carries N6-acetyllysine; alternate. The residue at position 66 (K66) is an N6-succinyllysine; alternate. FAD-binding positions include 71 to 80 (EKNETLGGTC) and K89. C80 and C85 form a disulfide bridge. 4 positions are modified to N6-acetyllysine; alternate: K104, K122, K132, and K143. 4 positions are modified to N6-succinyllysine; alternate: K104, K122, K132, and K143. G154 provides a ligand contact to FAD. N6-succinyllysine occurs at positions 159 and 166. 183-185 (TGS) contributes to the FAD binding site. NAD(+) is bound by residues 220–227 (GAGVIGVE) and E243. 2 positions are modified to N6-succinyllysine: K273 and K277. NAD(+) is bound at residue V278. Phosphoserine is present on residues S285 and S297. Residue G314 participates in NAD(+) binding. N6-acetyllysine is present on K346. FAD-binding positions include D355 and 361–364 (MLAH). N6-acetyllysine; alternate is present on K410. The residue at position 410 (K410) is an N6-succinyllysine; alternate. N6-acetyllysine occurs at positions 417 and 420. K430 bears the N6-succinyllysine mark. H487 (proton acceptor) is an active-site residue. K505 is subject to N6-acetyllysine; alternate. K505 carries the N6-succinyllysine; alternate modification.

Belongs to the class-I pyridine nucleotide-disulfide oxidoreductase family. As to quaternary structure, homodimer. Part of the multimeric pyruvate dehydrogenase complex that contains multiple copies of pyruvate dehydrogenase (subunits PDHA (PDHA1 or PDHA2) and PDHB, E1), dihydrolipoamide acetyltransferase (DLAT, E2) and lipoamide dehydrogenase (DLD, E3). These subunits are bound to an inner core composed of about 48 DLAT and 12 PDHX molecules (by non covalent bonds). The 2-oxoglutarate dehydrogenase complex is composed of OGDH (2-oxoglutarate dehydrogenase; E1), DLST (dihydrolipoamide succinyltransferase; E2), DLD (dihydrolipoamide dehydrogenase; E3) and the assembly factor KGD4. It contains multiple copies of the three enzymatic components (E1, E2 and E3). In the nucleus, the 2-oxoglutarate dehydrogenase complex associates with KAT2A. Interacts with PDHX. FAD is required as a cofactor. Post-translationally, tyrosine phosphorylated.

Its subcellular location is the mitochondrion matrix. It is found in the nucleus. The protein resides in the cell projection. The protein localises to the cilium. It localises to the flagellum. Its subcellular location is the cytoplasmic vesicle. It is found in the secretory vesicle. The protein resides in the acrosome. It carries out the reaction N(6)-[(R)-dihydrolipoyl]-L-lysyl-[protein] + NAD(+) = N(6)-[(R)-lipoyl]-L-lysyl-[protein] + NADH + H(+). Functionally, lipoamide dehydrogenase is a component of the glycine cleavage system as well as an E3 component of three alpha-ketoacid dehydrogenase complexes (pyruvate-, alpha-ketoglutarate-, and branched-chain amino acid-dehydrogenase complex). The 2-oxoglutarate dehydrogenase complex is mainly active in the mitochondrion. A fraction of the 2-oxoglutarate dehydrogenase complex also localizes in the nucleus and is required for lysine succinylation of histones: associates with KAT2A on chromatin and provides succinyl-CoA to histone succinyltransferase KAT2A. In monomeric form may have additional moonlighting function as serine protease. Involved in the hyperactivation of spermatazoa during capacitation and in the spermatazoal acrosome reaction. This is Dihydrolipoyl dehydrogenase, mitochondrial (DLD) from Bos taurus (Bovine).